A 491-amino-acid chain; its full sequence is Protein phosphatase ppm-1.G (491 aa).

The PPM-type phosphatase domain maps to 23 to 486 (SYACTTMQGW…DNMTVICTTF (464 aa)). Mn(2+) contacts are provided by D57 and G58. The span at 112 to 125 (KDIGDEGKPKKAGG) shows a compositional bias: basic and acidic residues. 2 disordered regions span residues 112 to 136 (KDIG…ADRI) and 170 to 294 (GDVS…EEMV). 2 stretches are compositionally biased toward acidic residues: residues 173 to 192 (SDDS…QDDT) and 260 to 294 (ATEE…EEMV). D428 and D477 together coordinate Mn(2+).

The protein belongs to the PP2C family. Mg(2+) is required as a cofactor. It depends on Mn(2+) as a cofactor.

It catalyses the reaction O-phospho-L-seryl-[protein] + H2O = L-seryl-[protein] + phosphate. It carries out the reaction O-phospho-L-threonyl-[protein] + H2O = L-threonyl-[protein] + phosphate. This Caenorhabditis elegans protein is Protein phosphatase ppm-1.G.